A 152-amino-acid polypeptide reads, in one-letter code: Xanthine-guanine phosphoribosyltransferase (152 aa).

5-phospho-alpha-D-ribose 1-diphosphate-binding positions include 37-38, arginine 69, and 88-96; these read RG and DDLVDTGGT. Residue arginine 69 participates in GMP binding. A Mg(2+)-binding site is contributed by aspartate 89. Guanine-binding residues include aspartate 92 and isoleucine 135. Positions 92 and 135 each coordinate xanthine. GMP-binding positions include 92 to 96 and 134 to 135; these read DTGGT and WI.

It belongs to the purine/pyrimidine phosphoribosyltransferase family. XGPT subfamily. In terms of assembly, homotetramer. Mg(2+) is required as a cofactor.

It is found in the cell inner membrane. It carries out the reaction GMP + diphosphate = guanine + 5-phospho-alpha-D-ribose 1-diphosphate. It catalyses the reaction XMP + diphosphate = xanthine + 5-phospho-alpha-D-ribose 1-diphosphate. The catalysed reaction is IMP + diphosphate = hypoxanthine + 5-phospho-alpha-D-ribose 1-diphosphate. It functions in the pathway purine metabolism; GMP biosynthesis via salvage pathway; GMP from guanine: step 1/1. It participates in purine metabolism; XMP biosynthesis via salvage pathway; XMP from xanthine: step 1/1. Its function is as follows. Purine salvage pathway enzyme that catalyzes the transfer of the ribosyl-5-phosphate group from 5-phospho-alpha-D-ribose 1-diphosphate (PRPP) to the N9 position of the 6-oxopurines guanine and xanthine to form the corresponding ribonucleotides GMP (guanosine 5'-monophosphate) and XMP (xanthosine 5'-monophosphate), with the release of PPi. To a lesser extent, also acts on hypoxanthine. This is Xanthine-guanine phosphoribosyltransferase from Yersinia pseudotuberculosis serotype O:1b (strain IP 31758).